We begin with the raw amino-acid sequence, 112 residues long: UPF0102 protein Cla_1413 (112 aa).

It belongs to the UPF0102 family.

The sequence is that of UPF0102 protein Cla_1413 from Campylobacter lari (strain RM2100 / D67 / ATCC BAA-1060).